The following is a 469-amino-acid chain: Zinc transporter SLC39A7 (469 aa).

Residues Leu5–Val25 traverse the membrane as a helical segment. Basic and acidic residues-rich tracts occupy residues His43–His56 and His66–His114. The disordered stretch occupies residues His43–Ala122. Pros-methylhistidine is present on His66. Helical transmembrane passes span Ala138–Val158, Leu169–Ile189, and Gly214–Glu234. Basic residues predominate over residues Gly242–Gly255. The disordered stretch occupies residues Gly242–Ser313. The segment covering His256–Gln266 has biased composition (low complexity). Residues Ser275 and Ser276 each carry the phosphoserine modification. Residues Arg295–Ser313 are compositionally biased toward basic and acidic residues. Helical transmembrane passes span Leu386–Val406, Gly417–Pro437, and Ser448–Leu468.

Belongs to the ZIP transporter (TC 2.A.5) family. KE4/Catsup subfamily. As to quaternary structure, homodimer. Post-translationally, methylation at some His residue by METTL9 leads to reduced zinc-binding. In terms of processing, rapidly phosphorylated by CK2 following Zn(2+) treatment. This phosphorylation is required for efficient cytosolic Zn(2+) release.

The protein localises to the endoplasmic reticulum membrane. It localises to the golgi apparatus. Its subcellular location is the cis-Golgi network membrane. The catalysed reaction is Zn(2+)(in) = Zn(2+)(out). Functionally, transports Zn(2+) from the endoplasmic reticulum (ER)/Golgi apparatus to the cytosol, playing an essential role in the regulation of cytosolic zinc levels. Acts as a gatekeeper of zinc release from intracellular stores, requiring post-translational activation by phosphorylation, resulting in activation of multiple downstream pathways leading to cell growth and proliferation. Has an essential role in B cell development and is required for proper B cell receptor signaling. Plays an important role in maintaining intestinal epithelial homeostasis and skin dermis development by regulating ER function. Controls cell signaling pathways involved in glucose metabolism in skeletal muscle. Has a protective role against ER stress in different biological contexts. Mediates Zn(2+)-induced ferroptosis. In Canis lupus familiaris (Dog), this protein is Zinc transporter SLC39A7.